We begin with the raw amino-acid sequence, 160 residues long: MGVFNYEIEATSVIPAARLFKAFILDGDNLFPKVAPQAISSVENIEGNGGPGTIKKISFPEGFPFKYVKDRVDEVDHTNFKYSYSVIEGGPVGDTLEKISNEIKIVATPNGGSILKINNKYHTKGDHEVKAEQIKASKEMGETLLRAVESYLLAHSDAYN.

Brassinolide contacts are provided by lysine 55, tyrosine 82, tyrosine 84, and asparagine 101.

This sequence belongs to the BetVI family.

It is found in the cytoplasm. May be a general steroid carrier protein. In Betula pendula (European white birch), this protein is Major pollen allergen Bet v 1-F/I (BETV1F).